A 775-amino-acid polypeptide reads, in one-letter code: Glutamine--tRNA ligase (775 aa).

N-acetylalanine is present on alanine 2. Phosphoserine is present on serine 70. Residues 271 to 273 (EPN) and 277 to 283 (HIGHAKA) contribute to the ATP site. Residue aspartate 303 coordinates L-glutamine. An N6-acetyllysine modification is found at lysine 309. Position 438 (tyrosine 438) interacts with L-glutamine. ATP contacts are provided by residues threonine 457, 486 to 487 (RL), and 494 to 496 (VSK). Serine 495 carries the post-translational modification Phosphoserine.

This sequence belongs to the class-I aminoacyl-tRNA synthetase family. Monomer. Part of a multisubunit complex that groups tRNA ligases for Arg (RARS1), Asp (DARS1), Gln (QARS1), Ile (IARS1), Leu (LARS1), Lys (KARS1), Met (MARS1) the bifunctional ligase for Glu and Pro (EPRS1) and the auxiliary subunits AIMP1/p43, AIMP2/p38 and EEF1E1/p18. Interacts with RARS1. Part of a complex composed of RARS1, QARS1 and AIMP1.

It localises to the cytoplasm. The protein resides in the cytosol. The catalysed reaction is tRNA(Gln) + L-glutamine + ATP = L-glutaminyl-tRNA(Gln) + AMP + diphosphate. Functionally, glutamine--tRNA ligase. Plays a critical role in brain development. In Mus musculus (Mouse), this protein is Glutamine--tRNA ligase (Qars1).